The following is a 404-amino-acid chain: Trigger factor (404 aa).

A PPIase FKBP-type domain is found at 160-225; sequence KDHLFVRTEE…VLEVKTLKLP (66 aa).

This sequence belongs to the FKBP-type PPIase family. Tig subfamily.

The protein resides in the cytoplasm. It catalyses the reaction [protein]-peptidylproline (omega=180) = [protein]-peptidylproline (omega=0). Functionally, involved in protein export. Acts as a chaperone by maintaining the newly synthesized protein in an open conformation. Functions as a peptidyl-prolyl cis-trans isomerase. The protein is Trigger factor of Thermus thermophilus (strain ATCC BAA-163 / DSM 7039 / HB27).